The chain runs to 480 residues: Selenium-binding protein 3 (480 aa).

Residues cysteine 12 and cysteine 13 each contribute to the selenite site.

The protein belongs to the selenium-binding protein family. In terms of tissue distribution, expressed in young seedlings, mostly in roots.

This is Selenium-binding protein 3 (SBP3) from Arabidopsis thaliana (Mouse-ear cress).